The primary structure comprises 320 residues: Fe-S cluster assembly protein dre2 (320 aa).

The N-terminal SAM-like domain stretch occupies residues 1–130 (MAKQTLLLSP…KPDIEEMQAV (130 aa)). Residues 131–213 (PLRLGRKNDH…DNLLDDSELS (83 aa)) are linker. A disordered region spans residues 141-166 (LAGAPSLEGSAAEHPFPPEVSEGKTA). [2Fe-2S] cluster-binding residues include Cys-222, Cys-233, Cys-236, and Cys-238. The tract at residues 222–238 (CRPKAGKRRRACKDCTC) is fe-S binding site A. Cys-283, Cys-286, Cys-294, and Cys-297 together coordinate [4Fe-4S] cluster. 2 short sequence motifs (cx2C motif) span residues 283 to 286 (CGNC) and 294 to 297 (CEGC). The interval 283-297 (CGNCSLGDAFRCEGC) is fe-S binding site B.

Belongs to the anamorsin family. In terms of assembly, monomer. Interacts with tah18. Interacts with mia40. Requires [2Fe-2S] cluster as cofactor. [4Fe-4S] cluster is required as a cofactor.

The protein localises to the cytoplasm. Its subcellular location is the mitochondrion intermembrane space. Functionally, component of the cytosolic iron-sulfur (Fe-S) protein assembly (CIA) machinery required for the maturation of extramitochondrial Fe-S proteins. Part of an electron transfer chain functioning in an early step of cytosolic Fe-S biogenesis, facilitating the de novo assembly of a [4Fe-4S] cluster on the scaffold complex cfd1-nbp35. Electrons are transferred to dre2 from NADPH via the FAD- and FMN-containing protein tah18. Tah18-dre2 are also required for the assembly of the diferric tyrosyl radical cofactor of ribonucleotide reductase (RNR), probably by providing electrons for reduction during radical cofactor maturation in the catalytic small subunit rnr2. This chain is Fe-S cluster assembly protein dre2, found in Neosartorya fischeri (strain ATCC 1020 / DSM 3700 / CBS 544.65 / FGSC A1164 / JCM 1740 / NRRL 181 / WB 181) (Aspergillus fischerianus).